Reading from the N-terminus, the 314-residue chain is Probable cell division protein WhiA (314 aa).

The H-T-H motif DNA-binding region spans 274-308 (SLKELGEMVSTGPISKSGVNHRLRKLNDLADKIRN).

It belongs to the WhiA family.

Involved in cell division and chromosome segregation. The chain is Probable cell division protein WhiA from Staphylococcus aureus (strain USA300).